The sequence spans 107 residues: Thioredoxin 1 (107 aa).

Positions 2-107 (SVAAAVTDAT…TLANTLDKHL (106 aa)) constitute a Thioredoxin domain. Cys-32 and Cys-35 form a disulfide bridge.

It belongs to the thioredoxin family.

In terms of biological role, participates in various redox reactions through the reversible oxidation of its active center dithiol to a disulfide and catalyzes dithiol-disulfide exchange reactions. In Synechococcus elongatus (strain ATCC 33912 / PCC 7942 / FACHB-805) (Anacystis nidulans R2), this protein is Thioredoxin 1 (trxA).